A 323-amino-acid chain; its full sequence is Malate dehydrogenase (323 aa).

Residues 20 to 25 (GAGRVG) and D44 each bind NAD(+). 2 residues coordinate substrate: R93 and R99. Residues N106 and 129–131 (VTN) contribute to the NAD(+) site. Positions 131 and 162 each coordinate substrate. H186 functions as the Proton acceptor in the catalytic mechanism.

It belongs to the LDH/MDH superfamily. MDH type 3 family.

It carries out the reaction (S)-malate + NAD(+) = oxaloacetate + NADH + H(+). In terms of biological role, catalyzes the reversible oxidation of malate to oxaloacetate. The chain is Malate dehydrogenase from Nostoc sp. (strain PCC 7120 / SAG 25.82 / UTEX 2576).